The sequence spans 163 residues: Glycine cleavage system H protein, mitochondrial (163 aa).

The transit peptide at 1–34 (MALRMWASSAANALGVSCAPKSHLLPALSLSRCF) directs the protein to the mitochondrion. Residues 56-137 (VATIGITDHA…YEEGWMVKVK (82 aa)) form the Lipoyl-binding domain. The residue at position 96 (Lys-96) is an N6-lipoyllysine.

The protein belongs to the GcvH family. As to quaternary structure, the glycine cleavage system is composed of four proteins: P, T, L and H. Requires (R)-lipoate as cofactor.

It localises to the mitochondrion. In terms of biological role, the glycine cleavage system catalyzes the degradation of glycine. The H protein shuttles the methylamine group of glycine from the P protein to the T protein. The sequence is that of Glycine cleavage system H protein, mitochondrial (GDCSH) from Mesembryanthemum crystallinum (Common ice plant).